Consider the following 370-residue polypeptide: L-lactate oxidase (370 aa).

One can recognise an FMN hydroxy acid dehydrogenase domain in the interval 8 to 367; that stretch reads DPDGMPVTLS…TPDLLTGFSG (360 aa). Residue Tyr-34 participates in pyruvate binding. FMN is bound by residues 87–89, Ser-116, and Gln-136; that span reads PMA. Residue Tyr-138 participates in pyruvate binding. Thr-164 provides a ligand contact to FMN. Residue Arg-173 participates in pyruvate binding. FMN-binding residues include Lys-238 and Ser-260. Residues His-262 and Arg-265 each contribute to the pyruvate site. His-262 functions as the Proton acceptor in the catalytic mechanism. FMN contacts are provided by residues 293–297 and Arg-317; that span reads DGGIR.

This sequence belongs to the FMN-dependent alpha-hydroxy acid dehydrogenase family. Homotetramer. The cofactor is FMN.

The catalysed reaction is (S)-lactate + O2 = pyruvate + H2O2. It carries out the reaction a (2S)-2-hydroxycarboxylate + O2 = a 2-oxocarboxylate + H2O2. The enzyme catalyses glycolate + O2 = glyoxylate + H2O2. It catalyses the reaction 2-hydroxyoctadecanoate + O2 = 2-oxooctadecanoate + H2O2. Its function is as follows. Catalyzes the oxidation of (S)-lactate (L-lactate) to pyruvate, with a reduction of O2 to H2O2. Is also able to use glycolate and to a lesser extent 2-hydroxyoctadecanoate as substrate. This is L-lactate oxidase from Roseobacter sp. (strain GAI101).